A 1040-amino-acid polypeptide reads, in one-letter code: Neprilysin-4 (1040 aa).

Residues Met-1 to Asn-27 form a disordered region. Residues Met-1–Arg-45 form a required for maintaining muscle integrity region. At Met-1 to Cys-55 the chain is on the cytoplasmic side. Residues Lys-56–Met-76 form a helical; Signal-anchor for type II membrane protein membrane-spanning segment. The Extracellular portion of the chain corresponds to Arg-77–Trp-1040. The Peptidase M13 domain occupies Glu-251–Trp-1040. Disulfide bonds link Cys-277-Cys-1025, Cys-285-Cys-985, Cys-452-Cys-700, and Cys-909-Cys-1037. Residues Asn-387, Asn-593, Asn-723, and Asn-819 are each glycosylated (N-linked (GlcNAc...) asparagine). Position 872 (His-872) interacts with Zn(2+). Residue Glu-873 is part of the active site. Residue His-876 participates in Zn(2+) binding. Asn-916 carries N-linked (GlcNAc...) asparagine glycosylation. Glu-934 is a binding site for Zn(2+). The active-site Proton donor is Asp-938. N-linked (GlcNAc...) asparagine glycosylation occurs at Asn-969.

The protein belongs to the peptidase M13 family. Interacts (via intracellular domain) with the putative carbohydrate kinase CG3534. The cofactor is Zn(2+). In terms of tissue distribution, expressed in the gonads and testes of adults, and the adult and larval brain (at protein level). In embryos, expressed in the pericardial, muscle founder and glia cells (at protein level). In stage 12 embryos, expressed in specific dorsal muscle founder cells such as DA1 and DO2, and also in the certain pericardial progenitor cells where expression persists throughout embryogenesis. Expressed in the glia cells of the embryonic, larval and adult central nervous system. Expressed in the somatic muscles of larvae, pupae and adults. Isoform A: Detected in the male abdomen (at protein level). Isoform B: Not detected in the male or female abdomen (at protein level).

The protein localises to the cell membrane. Its subcellular location is the sarcoplasmic reticulum. It is found in the cytoplasm. The catalysed reaction is Preferential cleavage of polypeptides between hydrophobic residues, particularly with Phe or Tyr at P1'.. In terms of biological role, metalloendoprotease which cleaves peptides at the amino side of hydrophobic residues - such as the hormones Akh and Dh31, and the neuropeptides Allatostatins (AST1, AST2, AST3 and AST4), Crz, Drosulfakinins (DSK-I and DSK-II), Lk, sNPF and the tachykinin peptides TK-1, TK-2, TK-4 and TK-5. Functions in female fertility, memory formation and may also act in regulating insulin signaling and food intake. Likely to be involved in controlling feeding behavior and the expression of insulin-like peptides by cleaving various regulatory peptides that include certain Drosulfakinins, Allatostatins and tachykinin peptides. Required in females for normal patterns of egg laying and hatching. Required in the dorsal paired medial neurons for the proper formation of long-term (LTM) and middle-term memories (MTM). Also required in the mushroom body neurons where it functions redundantly with neprilysins Nep2 and Nep3, in normal LTM formation. Functionally, cleaves angiotensin-1 and tachykinin neuropeptide substance P. Functions in maintaining muscle integrity, possibly independently of its endopeptidase activity. The protein is Neprilysin-4 of Drosophila melanogaster (Fruit fly).